The sequence spans 1029 residues: Beta-galactosidase (1029 aa).

Substrate is bound by residues asparagine 108 and aspartate 207. A Na(+)-binding site is contributed by aspartate 207. Mg(2+) contacts are provided by glutamate 422, histidine 424, and glutamate 467. Residues glutamate 467 and 543–546 (EYAH) contribute to the substrate site. The Proton donor role is filled by glutamate 467. Catalysis depends on glutamate 543, which acts as the Nucleophile. Asparagine 603 serves as a coordination point for Mg(2+). Residues phenylalanine 607 and asparagine 610 each coordinate Na(+). Residues asparagine 610 and tryptophan 1005 each coordinate substrate.

The protein belongs to the glycosyl hydrolase 2 family. In terms of assembly, homotetramer. Mg(2+) serves as cofactor. Requires Na(+) as cofactor.

The catalysed reaction is Hydrolysis of terminal non-reducing beta-D-galactose residues in beta-D-galactosides.. The polypeptide is Beta-galactosidase (Escherichia coli).